The sequence spans 207 residues: MPSLLISVLFLHIAIYIINTIAASTIDSLLWLIYMKLPTSASCIAREQHQMKLEVVQLKREMNATSSQDEFAKWAKLRRRHDKALEEYEVKNKQFSRFKSFFDVAVKALRWAGTSGLIVFLQFWFSKTPIFTLPPSWIPWQVEWVLSFPRAPMGTVSIQVWGGACAVVVALIGEAIGATVRYLYASKDSMEAIKVGAGAVEKEKKRQ.

The Lumenal portion of the chain corresponds to 1–4 (MPSL). Residues 5-24 (LISVLFLHIAIYIINTIAAS) traverse the membrane as a helical segment. Topologically, residues 25 to 110 (TIDSLLWLIY…FFDVAVKALR (86 aa)) are cytoplasmic. The stretch at 44–97 (IAREQHQMKLEVVQLKREMNATSSQDEFAKWAKLRRRHDKALEEYEVKNKQFSR) forms a coiled coil. Residues 111–131 (WAGTSGLIVFLQFWFSKTPIF) form a helical membrane-spanning segment. Residues 132 to 155 (TLPPSWIPWQVEWVLSFPRAPMGT) lie on the Lumenal side of the membrane. Residues 156 to 172 (VSIQVWGGACAVVVALI) traverse the membrane as a helical segment. Topologically, residues 173–207 (GEAIGATVRYLYASKDSMEAIKVGAGAVEKEKKRQ) are cytoplasmic.

The protein belongs to the WRB/GET1 family. Interacts with GET3.

It localises to the endoplasmic reticulum membrane. Required for the post-translational delivery of tail-anchored (TA) proteins to the endoplasmic reticulum. Acts as a membrane receptor for soluble GET3, which recognizes and selectively binds the transmembrane domain of TA proteins in the cytosol. This chain is Protein GET1, found in Paracoccidioides brasiliensis (strain Pb18).